Reading from the N-terminus, the 388-residue chain is Leucine aminopeptidase 1 (388 aa).

Positions 1–19 (MKLPALLILGVAASTMVLA) are cleaved as a signal peptide. The propeptide occupies 20–88 (AIAPDQVPLN…LPKVFPTPAV (69 aa)). N-linked (GlcNAc...) asparagine glycans are attached at residues Asn-96, Asn-119, Asn-149, Asn-164, and Asn-181. Zn(2+)-binding residues include His-189 and Asp-207. Asn-232 carries an N-linked (GlcNAc...) asparagine glycan. 2 residues coordinate Zn(2+): Glu-246 and Asp-273. Cys-322 and Cys-326 are disulfide-bonded. His-355 is a binding site for Zn(2+).

It belongs to the peptidase M28 family. M28E subfamily. Monomer. The cofactor is Zn(2+).

The protein resides in the secreted. Its function is as follows. Extracellular aminopeptidase that allows assimilation of proteinaceous substrates. This chain is Leucine aminopeptidase 1 (LAP1), found in Paracoccidioides brasiliensis (strain Pb03).